Reading from the N-terminus, the 713-residue chain is Putative ERAD-associated E3 ubiquitin-protein ligase component (713 aa).

The first 20 residues, 1 to 20, serve as a signal peptide directing secretion; it reads MQLLNFLICLFFIFKRCVFT. N48 and N123 each carry an N-linked (GlcNAc...) asparagine glycan. Sel1-like repeat units follow at residues 83–124 and 125–160; these read PESQ…TQNY and TYAL…HQIS. A glycan (N-linked (GlcNAc...) asparagine) is linked at N211. Sel1-like repeat units lie at residues 212–248, 280–315, 490–525, and 527–562; these read ISAH…RLVN, SIAA…SLNH, IHSL…AIHP, and ALAY…MHDT. N314 carries an N-linked (GlcNAc...) asparagine glycan. The interval 621–655 is disordered; the sequence is QLPPEPPTLQVDRTPQQPDPQETSESLPSPNTEEM. Positions 631–652 are enriched in polar residues; sequence VDRTPQQPDPQETSESLPSPNT. Residues 671–691 traverse the membrane as a helical segment; it reads GRFLETACVTLIVVVVGLVLM.

It belongs to the sel-1 family.

It is found in the endoplasmic reticulum membrane. Functionally, component of the endoplasmic reticulum quality control (ERQC) system involved in ubiquitin-dependent degradation of missfolded endoplasmic reticulum proteins. This chain is Putative ERAD-associated E3 ubiquitin-protein ligase component, found in Schizosaccharomyces pombe (strain 972 / ATCC 24843) (Fission yeast).